Here is a 522-residue protein sequence, read N- to C-terminus: Tubulin-specific chaperone E (522 aa).

In terms of domain architecture, CAP-Gly spans 27–71 (GNVPPTPGLWLGVEWDNHLRGKHNGTHEGTKYFTCSHPTGGSFIR). LRR repeat units follow at residues 149–170 (NIMT…AHIS), 175–196 (NLTS…SSLA), 201–222 (NLKV…QCAS), 226–248 (ALEE…NNLQ), 249–270 (NLTI…HTIA), 274–295 (RLKQ…DVDF), and 303–324 (SLTS…NELH). An LRRCT domain is found at 337–379 (NPLMDLDKNPETVRQLIIAKIENLKFLNKTEIFPTERRGAELD).

This sequence belongs to the TBCE family. In terms of assembly, supercomplex made of cofactors A to E. Cofactors A and D function by capturing and stabilizing tubulin in a quasi-native conformation. Cofactor E binds to the cofactor D-tubulin complex; interaction with cofactor C then causes the release of tubulin polypeptides that are committed to the native state.

It is found in the cytoplasm. The protein resides in the cytoskeleton. Tubulin-folding protein; involved in the second step of the tubulin folding pathway. This is Tubulin-specific chaperone E (tbce) from Xenopus laevis (African clawed frog).